Here is a 218-residue protein sequence, read N- to C-terminus: MANSSSVYDWFQERLEIQDITDDVTSKYVPPHVNIFYCLGGITLVCFLIQFATGFAMTFYYKPTVTQAYSSVSYLMTDVSFGWLIRSVHRWSASMMVLMLILHVFRVYLTGGFKRPRELTWVTGVVMAVITVAFGVTGYSLPWDQVGYWAVKIVSGVPAAIPIIGDFMVELLRGGESVGQSTLTRFYSLHTFVLPWSLAVFMLMHFLMIRKQGISGPL.

A helical transmembrane segment spans residues 35–55 (IFYCLGGITLVCFLIQFATGF). Residue Cys38 coordinates heme c. Heme b is bound by residues His89 and His103. The next 3 helical transmembrane spans lie at 93-113 (ASMM…TGGF), 119-139 (LTWV…VTGY), and 189-209 (LHTF…FLMI). Heme b contacts are provided by His190 and His205.

This sequence belongs to the cytochrome b family. PetB subfamily. In terms of assembly, the 4 large subunits of the cytochrome b6-f complex are cytochrome b6, subunit IV (17 kDa polypeptide, PetD), cytochrome f and the Rieske protein, while the 4 small subunits are PetG, PetL, PetM and PetN. The complex functions as a dimer. Requires heme b as cofactor. Heme c serves as cofactor.

It is found in the cellular thylakoid membrane. Component of the cytochrome b6-f complex, which mediates electron transfer between photosystem II (PSII) and photosystem I (PSI), cyclic electron flow around PSI, and state transitions. The polypeptide is Cytochrome b6 (Prochlorococcus marinus (strain MIT 9215)).